We begin with the raw amino-acid sequence, 625 residues long: Chaperone protein HtpG (625 aa).

Residues 1–330 (MAKQVQNFNA…SSDLSLNVSR (330 aa)) form an a; substrate-binding region. Residues 331–545 (ELLQQDRQVT…SADPSAHMQK (215 aa)) are b. The tract at residues 546 to 625 (LMAQMGKEYA…MVQAADSTKH (80 aa)) is c.

It belongs to the heat shock protein 90 family. As to quaternary structure, homodimer.

Its subcellular location is the cytoplasm. Functionally, molecular chaperone. Has ATPase activity. The polypeptide is Chaperone protein HtpG (Bdellovibrio bacteriovorus (strain ATCC 15356 / DSM 50701 / NCIMB 9529 / HD100)).